We begin with the raw amino-acid sequence, 424 residues long: Tryptophan synthase beta chain (424 aa).

An N6-(pyridoxal phosphate)lysine modification is found at Lys108.

The protein belongs to the TrpB family. Tetramer of two alpha and two beta chains. Requires pyridoxal 5'-phosphate as cofactor.

It carries out the reaction (1S,2R)-1-C-(indol-3-yl)glycerol 3-phosphate + L-serine = D-glyceraldehyde 3-phosphate + L-tryptophan + H2O. Its pathway is amino-acid biosynthesis; L-tryptophan biosynthesis; L-tryptophan from chorismate: step 5/5. The beta subunit is responsible for the synthesis of L-tryptophan from indole and L-serine. The sequence is that of Tryptophan synthase beta chain (trpB) from Thermoplasma acidophilum (strain ATCC 25905 / DSM 1728 / JCM 9062 / NBRC 15155 / AMRC-C165).